Consider the following 687-residue polypeptide: Mitochondrial 15S rRNA processing factor ppr3 (687 aa).

Residues 1 to 49 (MLNKCSGSLTLLAVRRFCGPCRRLHYHKDNPNNINIAKNLLNNNIQARC) constitute a mitochondrion transit peptide. PPR repeat units follow at residues 262–296 (NGLVYQSYAIALSSLGKHKDLVALYSEQKSVSITP), 297–331 (SKDFLNACIKAFSRTKEFTKAWEVFNFMKFTATSI), 334–368 (SAETYGLMIQICSSQYNPEKALDLYNEMKLRPIDP), and 372–407 (TTFVINNLIHALATDVRFQTVAFSLLQDLSHYGLRP).

The protein belongs to the CCM1 family. Binds to mitochondrial small subunit 15S rRNA.

The protein localises to the mitochondrion. Its function is as follows. Regulates mitochondrial small subunit maturation by controlling 15S rRNA 5'-end processing. Localizes to the 5' precursor of the 15S rRNA in a position that is subsequently occupied by mS47 in the mature yeast mtSSU. Uses structure and sequence-specific RNA recognition, binding to a single-stranded region of the precursor and specifically recognizing bases -6 to -1. The exchange of Ccm1 for mS47 is coupled to the irreversible removal of precursor rRNA that is accompanied by conformational changes of the mitoribosomal proteins uS5m and mS26. These conformational changes signal completion of 5'-end rRNA processing through protection of the mature 5'-end of the 15S rRNA and stabilization of mS47. The removal of the 5' precursor together with the dissociation of Ccm1 may be catalyzed by the 5'-3' exoribonuclease Pet127. Involved in the specific removal of group I introns in mitochondrial encoded transcripts. This Schizosaccharomyces pombe (strain 972 / ATCC 24843) (Fission yeast) protein is Mitochondrial 15S rRNA processing factor ppr3.